The following is a 387-amino-acid chain: Eukaryotic translation initiation factor 3 subunit M (387 aa).

The PCI domain maps to 181 to 340 (LSSKVMIELL…RKVHISSTMH (160 aa)).

This sequence belongs to the eIF-3 subunit M family. Component of the eukaryotic translation initiation factor 3 (eIF-3) complex. The eIF-3 complex interacts with pix.

Its subcellular location is the cytoplasm. The protein resides in the golgi apparatus. In terms of biological role, component of the eukaryotic translation initiation factor 3 (eIF-3) complex, which is involved in protein synthesis of a specialized repertoire of mRNAs and, together with other initiation factors, stimulates binding of mRNA and methionyl-tRNAi to the 40S ribosome. The eIF-3 complex specifically targets and initiates translation of a subset of mRNAs involved in cell proliferation. The chain is Eukaryotic translation initiation factor 3 subunit M from Drosophila ananassae (Fruit fly).